A 227-amino-acid chain; its full sequence is MYGDYMKYMKKIVLFLIINILPILILGLYLYANIGGAEDVKEVIENSPFKEFTYIDHKTLMMLKNDVNLKNMPEFYKESIILINGIYIGNHGSFGIKIPLGFLIKYIPIDNFKYYNGVLIKNLNEDDLGKAEMNDLVNTIPPNYKDVLIYRENYTIGIYYDLNSNKTYLIEVFRKPNNQEIDTEKLRNELLQKTNAVDCNVVDMGDKVYVYLEFNGIDLNLINNGIT.

A run of 2 helical transmembrane segments spans residues 12 to 32 and 80 to 100; these read IVLFLIINILPILILGLYLYA and IILINGIYIGNHGSFGIKIPL.

It localises to the cell membrane. This is an uncharacterized protein from Methanocaldococcus jannaschii (strain ATCC 43067 / DSM 2661 / JAL-1 / JCM 10045 / NBRC 100440) (Methanococcus jannaschii).